A 450-amino-acid polypeptide reads, in one-letter code: 3-phosphoshikimate 1-carboxyvinyltransferase (450 aa).

A disordered region spans residues 1–23 (MSSHGAPIPMTSSACGPLTGEAR). 3-phosphoshikimate-binding residues include Lys28, Ser29, and Arg33. Lys28 lines the phosphoenolpyruvate pocket. Residues Gly101 and Arg129 each contribute to the phosphoenolpyruvate site. 3-phosphoshikimate contacts are provided by Ser174, Gln176, Asp327, and Lys354. Position 176 (Gln176) interacts with phosphoenolpyruvate. Asp327 serves as the catalytic Proton acceptor. Residues Arg358 and Arg403 each coordinate phosphoenolpyruvate.

The protein belongs to the EPSP synthase family. As to quaternary structure, monomer.

It localises to the cytoplasm. The enzyme catalyses 3-phosphoshikimate + phosphoenolpyruvate = 5-O-(1-carboxyvinyl)-3-phosphoshikimate + phosphate. It participates in metabolic intermediate biosynthesis; chorismate biosynthesis; chorismate from D-erythrose 4-phosphate and phosphoenolpyruvate: step 6/7. Its function is as follows. Catalyzes the transfer of the enolpyruvyl moiety of phosphoenolpyruvate (PEP) to the 5-hydroxyl of shikimate-3-phosphate (S3P) to produce enolpyruvyl shikimate-3-phosphate and inorganic phosphate. The protein is 3-phosphoshikimate 1-carboxyvinyltransferase of Roseobacter denitrificans (strain ATCC 33942 / OCh 114) (Erythrobacter sp. (strain OCh 114)).